Reading from the N-terminus, the 971-residue chain is Polyamine-modulated factor 1-binding protein 1 (971 aa).

6 coiled-coil regions span residues 37 to 69, 117 to 229, 282 to 325, 355 to 680, 706 to 827, and 879 to 916; these read NKQY…LQAS, EKLH…ACSN, LHVE…LREE, QKLS…SAIQ, QDDL…DEKE, and IAKL…KAGT.

Expressed in testis and more specifically in ODF, the sperm tail specific cytoskeletal structure. Also expressed in epididymides and brain.

It localises to the cell projection. The protein localises to the cilium. Its subcellular location is the flagellum. Its function is as follows. Required for normal spermatogenesis. It functions as a scaffold protein that attaches the sperm head-tail connecting piece to the nuclear envelope, thus maintaining sperm head and tail integrity. May also be involved in the general organization of cellular cytoskeleton. This is Polyamine-modulated factor 1-binding protein 1 (Pmfbp1) from Rattus norvegicus (Rat).